A 212-amino-acid chain; its full sequence is ATP-dependent Clp protease proteolytic subunit (212 aa).

Ser106 functions as the Nucleophile in the catalytic mechanism. His131 is a catalytic residue.

It belongs to the peptidase S14 family. Fourteen ClpP subunits assemble into 2 heptameric rings which stack back to back to give a disk-like structure with a central cavity, resembling the structure of eukaryotic proteasomes.

The protein localises to the cytoplasm. It carries out the reaction Hydrolysis of proteins to small peptides in the presence of ATP and magnesium. alpha-casein is the usual test substrate. In the absence of ATP, only oligopeptides shorter than five residues are hydrolyzed (such as succinyl-Leu-Tyr-|-NHMec, and Leu-Tyr-Leu-|-Tyr-Trp, in which cleavage of the -Tyr-|-Leu- and -Tyr-|-Trp bonds also occurs).. In terms of biological role, cleaves peptides in various proteins in a process that requires ATP hydrolysis. Has a chymotrypsin-like activity. Plays a major role in the degradation of misfolded proteins. This chain is ATP-dependent Clp protease proteolytic subunit, found in Rhodopseudomonas palustris (strain HaA2).